Reading from the N-terminus, the 549-residue chain is Leiomodin-2 (549 aa).

The tropomyosin-binding stretch occupies residues 1 to 42 (MSTFGYRRGLSKYESIDEDELLASLTAEELKELERELEDIEP). Positions 1–47 (MSTFGYRRGLSKYESIDEDELLASLTAEELKELERELEDIEPDRNLP) are interaction with tropomyosin alpha. Interaction with actin regions lie at residues 1-164 (MSTF…PDNS), 165-499 (KPKT…KEIK), and 523-542 (AHEN…LRRV). S11, S15, and S24 each carry phosphoserine. 4 disordered regions span residues 91–166 (KLAE…NSKP), 179–200 (TNGN…HPCG), 358–455 (MDKQ…PGKK), and 469–534 (ESAQ…IRGS). 2 stretches are compositionally biased toward acidic residues: residues 95-105 (EDKEESEEELI) and 113-143 (VSEE…EEVT). Polar residues-rich tracts occupy residues 150 to 163 (INGT…NPDN) and 179 to 192 (TNGN…NTES). Basic and acidic residues predominate over residues 358 to 376 (MDKQRQKRMQEQKQQEGHD). Over residues 390–401 (TPGSSPYASPRQ) the composition is skewed to polar residues. S406 bears the Phosphoserine mark. Over residues 420 to 452 (PPSPVAPPPPPPPPPLPPHMLPPPPPPPAPPLP) the composition is skewed to pro residues. Positions 457-515 (ITRNIAEVIKQQESAQRALQNGQRKKKGKKVKKQPNNILKEIKNSLRSVQEKKMEESSR) form a coiled coil. Residues 469 to 478 (ESAQRALQNG) are compositionally biased toward polar residues. A compositionally biased stretch (basic residues) spans 479–489 (QRKKKGKKVKK). Residues 496–514 (KEIKNSLRSVQEKKMEESS) are compositionally biased toward basic and acidic residues. Residues 523–542 (AHENLMEAIRGSSIRQLRRV) form the WH2 domain.

This sequence belongs to the tropomodulin family. As to quaternary structure, can bind at least three actin monomers and thereby provides a nucleus for actin filament formation. Interacts (via N-terminus) with tropomyosin alpha (TPM1) (via N-terminus). May also interact with TPM2 (via N-terminus). Interacts with FLII.

The protein resides in the cytoplasm. It localises to the myofibril. Its subcellular location is the sarcomere. The protein localises to the m line. It is found in the cytoskeleton. Its function is as follows. Mediates nucleation of actin filaments and thereby promotes actin polymerization. Plays a role in the regulation of actin filament length. Required for normal sarcomere organization in the heart, and for normal heart function. The chain is Leiomodin-2 (Lmod2) from Rattus norvegicus (Rat).